Here is a 491-residue protein sequence, read N- to C-terminus: 2,3-bisphosphoglycerate-independent phosphoglycerate mutase (491 aa).

Mn(2+)-binding residues include aspartate 11 and serine 61. Serine 61 serves as the catalytic Phosphoserine intermediate. Residues histidine 118, 147 to 148, arginine 177, arginine 183, 247 to 250, and lysine 320 each bind substrate; these read RD and RNDR. Residues aspartate 386, histidine 390, aspartate 427, histidine 428, and histidine 445 each coordinate Mn(2+).

The protein belongs to the BPG-independent phosphoglycerate mutase family. Monomer. It depends on Mn(2+) as a cofactor.

It carries out the reaction (2R)-2-phosphoglycerate = (2R)-3-phosphoglycerate. It functions in the pathway carbohydrate degradation; glycolysis; pyruvate from D-glyceraldehyde 3-phosphate: step 3/5. Its function is as follows. Catalyzes the interconversion of 2-phosphoglycerate and 3-phosphoglycerate. The polypeptide is 2,3-bisphosphoglycerate-independent phosphoglycerate mutase (Helicobacter pylori (strain J99 / ATCC 700824) (Campylobacter pylori J99)).